The chain runs to 257 residues: Imidazole glycerol phosphate synthase subunit HisF (257 aa).

Residues D11 and D130 contribute to the active site.

The protein belongs to the HisA/HisF family. As to quaternary structure, heterodimer of HisH and HisF.

It localises to the cytoplasm. The enzyme catalyses 5-[(5-phospho-1-deoxy-D-ribulos-1-ylimino)methylamino]-1-(5-phospho-beta-D-ribosyl)imidazole-4-carboxamide + L-glutamine = D-erythro-1-(imidazol-4-yl)glycerol 3-phosphate + 5-amino-1-(5-phospho-beta-D-ribosyl)imidazole-4-carboxamide + L-glutamate + H(+). Its pathway is amino-acid biosynthesis; L-histidine biosynthesis; L-histidine from 5-phospho-alpha-D-ribose 1-diphosphate: step 5/9. Functionally, IGPS catalyzes the conversion of PRFAR and glutamine to IGP, AICAR and glutamate. The HisF subunit catalyzes the cyclization activity that produces IGP and AICAR from PRFAR using the ammonia provided by the HisH subunit. The protein is Imidazole glycerol phosphate synthase subunit HisF of Shewanella putrefaciens (strain CN-32 / ATCC BAA-453).